A 258-amino-acid chain; its full sequence is Tryptophan synthase alpha chain (258 aa).

Catalysis depends on proton acceptor residues E47 and D58.

This sequence belongs to the TrpA family. In terms of assembly, tetramer of two alpha and two beta chains.

It catalyses the reaction (1S,2R)-1-C-(indol-3-yl)glycerol 3-phosphate + L-serine = D-glyceraldehyde 3-phosphate + L-tryptophan + H2O. It participates in amino-acid biosynthesis; L-tryptophan biosynthesis; L-tryptophan from chorismate: step 5/5. The alpha subunit is responsible for the aldol cleavage of indoleglycerol phosphate to indole and glyceraldehyde 3-phosphate. The protein is Tryptophan synthase alpha chain of Bacillus cereus (strain G9842).